Here is a 94-residue protein sequence, read N- to C-terminus: Large ribosomal subunit protein eL31 (94 aa).

Belongs to the eukaryotic ribosomal protein eL31 family.

This is Large ribosomal subunit protein eL31 (rpl31e) from Pyrococcus abyssi (strain GE5 / Orsay).